A 414-amino-acid polypeptide reads, in one-letter code: Sensor protein CutS (414 aa).

Residues Met1 to Thr15 are compositionally biased toward pro residues. The interval Met1–Ala21 is disordered. A run of 2 helical transmembrane segments spans residues Leu37–Leu57 and Ser121–Gly141. An HAMP domain is found at Arg142–Thr194. In terms of domain architecture, Histidine kinase spans Asn202–Val414. His205 is subject to Phosphohistidine; by autocatalysis.

It localises to the cell membrane. The enzyme catalyses ATP + protein L-histidine = ADP + protein N-phospho-L-histidine.. Member of the two-component regulatory system CutS/CutR, involved in the regulation of copper metabolism. The polypeptide is Sensor protein CutS (cutS) (Streptomyces coelicolor (strain ATCC BAA-471 / A3(2) / M145)).